The sequence spans 251 residues: HTH-type transcriptional regulator UlaR (251 aa).

In terms of domain architecture, HTH deoR-type spans Glu3–Ala58. The H-T-H motif DNA-binding region spans Val20 to Asp39.

It is found in the cytoplasm. Represses ulaG and the ulaABCDEF operon. In Salmonella agona (strain SL483), this protein is HTH-type transcriptional regulator UlaR.